We begin with the raw amino-acid sequence, 177 residues long: Meiotic chromosome segregation protein C17A2.07c (177 aa).

The disordered stretch occupies residues 71–90 (EDDSINKPTEEADEAPRTQL). The span at 74 to 86 (SINKPTEEADEAP) shows a compositional bias: basic and acidic residues.

It is found in the nucleus. In terms of biological role, involved in meiotic chromosome segregation. This chain is Meiotic chromosome segregation protein C17A2.07c, found in Schizosaccharomyces pombe (strain 972 / ATCC 24843) (Fission yeast).